The primary structure comprises 1116 residues: MTMMTPPPVDQPEDEEMLVPNSDLVDGPAQPMEVTQPETAASTVENQPAEDPPTLKFTWTIPNFSRQNTRKHYSDVFVVGGYKWRILIFPKGNNVDHLSMYLDVSDAASLPYGWSRYAQFSLAVVNQIHTRYTVRKETQHQFNARESDWGFTSFMPLSELYDPSRGYLVNDTVLVEAEVAVRKVLDYWSYDSKKETGFVGLKNQGATCYMNSLLQTLYHIPYFRKAVYHMPTTENDAPTASIPLALQSLFYKLQYNDTSVATKELTKSFGWDTYDSFMQHDVQELNRVLCEKLEDKMKGTVVEGTIQQLFEGHHMNYIECINVDFKSTRKESFYDLQLDVKGCKDVYASFDKYVEVERLEGDNKYHAEGHGLQDAKKGVLFIDFPPVLQLQLKRFEYDFMRDTMVKINDRYEFPLELDLDREDGKYLSPDADRSVRNLYTLHSVLVHSGGVHGGHYYAFIRPTLSDQWYKFDDERVTKEDLKRALEEQYGGEEELPQTNPGFNNNPPFKFTKYSNAYMLVYIRESDKDKIICNVDEKDIAEHLRVRLKKEQEEKEDKRRYKAQAHLYTIIKVARDEDLKEQIGKDIYFDLVDHDKVRSFRIQKQTPFQQFKEEVAKEFGVPVQLQRFWIWAKRQNHTYRPNRPLTPQEELQPVGQIREASNKANTAELKLFLEVEHLDLRPIPPPEKSKEDILLFFKLYDPEKAVLSYAGRLMVKSSSKPMDITGKLNEMVGFAPDEEIELFEEIKFEPCVMCEHLDKKTSFRLCQIEDGDIICFQKPLVNKEIECLYPAVPSFLEYVQNRQLVRFRALEKPKEDEFVLELSKQHTYDDVVEKVAEKLGLDDPSKLRLTSHNCYSQQPKPQPIKYRGVDHLSDMLVHYNQTSDILYYEVLDIPLPELQGLKTLKVAFHHATKEEVVIHNIRLPKQSTVGDVINELKTKVELSHPDAELRLLEVFYHKIYKIFPSTERIENINDQYWTLRAEEIPEEEKNIGPNDRLILVYHFAKETGQNQQVQNFGEPFFLVIHEGETLEEIKNRIQKKLHVSDEDFAKWKFAFMSMGRPEYLQDTDVVYNRFQRRDVYGAFEQYLGLEHADTTPKRAYAANQNRHAYEKPVKIYN.

Positions 1–10 are enriched in pro residues; the sequence is MTMMTPPPVD. The interval 1 to 52 is disordered; it reads MTMMTPPPVDQPEDEEMLVPNSDLVDGPAQPMEVTQPETAASTVENQPAEDP. Positions 36–46 are enriched in polar residues; that stretch reads QPETAASTVEN. In terms of domain architecture, MATH spans 54-179; sequence TLKFTWTIPN…NDTVLVEAEV (126 aa). Residues 199–524 form the USP domain; the sequence is VGLKNQGATC…NAYMLVYIRE (326 aa). Residue cysteine 208 is the Nucleophile of the active site. The active-site Proton acceptor is the histidine 455.

It belongs to the peptidase C19 family. Interacts with SIC/RON3.

The enzyme catalyses Thiol-dependent hydrolysis of ester, thioester, amide, peptide and isopeptide bonds formed by the C-terminal Gly of ubiquitin (a 76-residue protein attached to proteins as an intracellular targeting signal).. Recognizes and hydrolyzes the peptide bond at the C-terminal Gly of ubiquitin. Involved in the processing of poly-ubiquitin precursors as well as that of ubiquitinated proteins. Positive regulator of root meristem development that, together with UBP13, prevents the ubiquitination and turnover of RGFR1 induced by the RGF1 hormone peptide, thus influencing PLT1 and PLT2 expression. This chain is Ubiquitin C-terminal hydrolase 12, found in Arabidopsis thaliana (Mouse-ear cress).